A 397-amino-acid polypeptide reads, in one-letter code: Elongation factor Tu (397 aa).

The region spanning 10–206 (KPHVNIGTIG…AVDTYIPTPE (197 aa)) is the tr-type G domain. A G1 region spans residues 19-26 (GHVDHGKT). 19 to 26 (GHVDHGKT) serves as a coordination point for GTP. A Mg(2+)-binding site is contributed by Thr-26. A G2 region spans residues 60 to 64 (GITIN). The G3 stretch occupies residues 81–84 (DCPG). Residues 81 to 85 (DCPGH) and 136 to 139 (NKSD) each bind GTP. The tract at residues 136–139 (NKSD) is G4. Residues 174 to 176 (SAL) are G5.

The protein belongs to the TRAFAC class translation factor GTPase superfamily. Classic translation factor GTPase family. EF-Tu/EF-1A subfamily. As to quaternary structure, monomer.

It is found in the cytoplasm. It carries out the reaction GTP + H2O = GDP + phosphate + H(+). In terms of biological role, GTP hydrolase that promotes the GTP-dependent binding of aminoacyl-tRNA to the A-site of ribosomes during protein biosynthesis. In Clostridium kluyveri (strain ATCC 8527 / DSM 555 / NBRC 12016 / NCIMB 10680 / K1), this protein is Elongation factor Tu.